The chain runs to 182 residues: Endoribonuclease YbeY (182 aa).

3 residues coordinate Zn(2+): H115, H119, and H125.

Belongs to the endoribonuclease YbeY family. It depends on Zn(2+) as a cofactor.

It is found in the cytoplasm. Its function is as follows. Single strand-specific metallo-endoribonuclease involved in late-stage 70S ribosome quality control and in maturation of the 3' terminus of the 16S rRNA. This Bifidobacterium longum subsp. infantis (strain ATCC 15697 / DSM 20088 / JCM 1222 / NCTC 11817 / S12) protein is Endoribonuclease YbeY.